Consider the following 207-residue polypeptide: Large ribosomal subunit protein uL4 (207 aa).

The disordered stretch occupies residues 48 to 87 (THAVKNRSAVSGGGKKPWRQKGTGRARQGSIRSPQFRGGG).

This sequence belongs to the universal ribosomal protein uL4 family. In terms of assembly, part of the 50S ribosomal subunit.

In terms of biological role, one of the primary rRNA binding proteins, this protein initially binds near the 5'-end of the 23S rRNA. It is important during the early stages of 50S assembly. It makes multiple contacts with different domains of the 23S rRNA in the assembled 50S subunit and ribosome. Its function is as follows. Forms part of the polypeptide exit tunnel. The sequence is that of Large ribosomal subunit protein uL4 from Limosilactobacillus reuteri subsp. reuteri (strain JCM 1112) (Lactobacillus reuteri).